A 470-amino-acid chain; its full sequence is UDP-N-acetylmuramate--L-alanine ligase (470 aa).

Position 118-124 (118-124 (GTHGKTT)) interacts with ATP.

The protein belongs to the MurCDEF family.

It localises to the cytoplasm. It catalyses the reaction UDP-N-acetyl-alpha-D-muramate + L-alanine + ATP = UDP-N-acetyl-alpha-D-muramoyl-L-alanine + ADP + phosphate + H(+). The protein operates within cell wall biogenesis; peptidoglycan biosynthesis. In terms of biological role, cell wall formation. This is UDP-N-acetylmuramate--L-alanine ligase from Cereibacter sphaeroides (strain ATCC 17029 / ATH 2.4.9) (Rhodobacter sphaeroides).